Reading from the N-terminus, the 64-residue chain is PYLa/PGLa B (64 aa).

The signal sequence occupies residues methionine 1–alanine 20. The propeptide occupies glutamate 21–arginine 35. Residue leucine 59 is modified to Leucine amide. Residues glycine 60–serine 64 constitute a propeptide that is removed on maturation.

The protein belongs to the gastrin/cholecystokinin family. Magainin subfamily. As to expression, expressed by the skin glands. Synthesized in the stomach and stored in a novel granular multinucleated cell in the gastric mucosa. Stored as active, processed peptides in large granules within the granular gland secretions of the skin.

The protein resides in the secreted. Functionally, PGLa and PGLa-H display a broad-spectrum of antibacterial activity against a range of Gram-positive and Gram-negative bacteria. PGLa also displays antifungal activity against C.albicans ATCC 14053. PGLa-H shows moderate antibacterial activity against the multidrug-resistant methicillin-resistant S.aureus (MRSA) but exhibits very little hemolytic activity. The protein is PYLa/PGLa B (pgla-b) of Xenopus laevis (African clawed frog).